A 513-amino-acid chain; its full sequence is MSTKLDTILENPQYAILCGITVFTLFIVQLSLFDRGRNYPLLNPKGSFEISTNRVVREFISDSRNLLEKGKSLFKGQPYRANTDWGEVVVIPPQFLDALKSHKDLDFTIPAQDDSHCYIPGFEPFDADPNLSKVVIKYLTKALNRVTGPLSEEASIAFRTVISDSPEWHEIQPQPAFVRIISRMSSRVFMGEELCRNEEWVKLAGDYTVQSFKTGDELRMYPRWSRPFVHHFLPSCKEVRRTLNAARNCLNPLLERRNAIKAEAKAKGEPCPYDNSFEWFEKEYSTHDPAVAQLNLSLVAIHTTTDLLMETVFNIAQHPELLAPLREEIVRVLSTEGLKKTALLNLKLMDSVLKESQRLRPALLGSFRRLAMADVTLPNGDVIKKGTKIVCSTSHMWSADSHESGEEFDGYRFLRMREKEETEQGKTSHPHLVSPSSDHLGFGFGNHACPGRFFAANELKIALCHMLLKYDWKLAKDAVPRSASFGMILMPDLRTKLLIRRRSEELDIDSVES.

Residues glutamine 13–leucine 32 form a helical membrane-spanning segment. N-linked (GlcNAc...) asparagine glycosylation is found at asparagine 130 and asparagine 295. Cysteine 449 provides a ligand contact to heme.

Belongs to the cytochrome P450 family. It depends on heme as a cofactor.

The protein resides in the membrane. The protein operates within mycotoxin biosynthesis. Functionally, cytochrome P450 monooxygenase; part of the gene cluster that mediates the biosynthesis of equisetin, a trans-fused decalin-containing tetramic acid with antimicrobial activity. The PKS module of eqxS together with the enoylreductase eqxC catalyze the formation of the polyketide unit which is then conjugated to L-serine by the condensation domain of the eqxS NRPS module. Activity of the Dieckmann cyclase domain (RED) results in release of the Dieckmann product intermediate. Diels-Alderase eqx3 is involved in endo-selective Diels-Alder cycloaddition to form the decalin ring, leading to the production of N-desmethylequisetin also called trichosetin. Subsequent N-methylation is carried out by eqxD to give equisetin. The polypeptide is Cytochrome P450 monooxygenase eqxH (Fusarium heterosporum).